Consider the following 539-residue polypeptide: 2-isopropylmalate synthase (539 aa).

The Pyruvate carboxyltransferase domain maps to 8 to 269; the sequence is VLIFDTTLRD…YFNPFFGRPP (262 aa). Residues D17, H208, H210, and N244 each contribute to the Mn(2+) site. The tract at residues 408 to 539 is regulatory domain; the sequence is QLKLVQVSCG…DLAKVDKKGI (132 aa).

It belongs to the alpha-IPM synthase/homocitrate synthase family. LeuA type 1 subfamily. In terms of assembly, homodimer. Requires Mn(2+) as cofactor.

Its subcellular location is the cytoplasm. The catalysed reaction is 3-methyl-2-oxobutanoate + acetyl-CoA + H2O = (2S)-2-isopropylmalate + CoA + H(+). Its pathway is amino-acid biosynthesis; L-leucine biosynthesis; L-leucine from 3-methyl-2-oxobutanoate: step 1/4. Catalyzes the condensation of the acetyl group of acetyl-CoA with 3-methyl-2-oxobutanoate (2-ketoisovalerate) to form 3-carboxy-3-hydroxy-4-methylpentanoate (2-isopropylmalate). This chain is 2-isopropylmalate synthase, found in Prochlorococcus marinus (strain NATL1A).